Consider the following 304-residue polypeptide: Ornithine carbamoyltransferase (304 aa).

Carbamoyl phosphate-binding positions include 47-50 (STRT), Arg-98, and 125-128 (HPCQ). Residues Asn-156, Asp-221, and 225 to 226 (SM) each bind L-ornithine. Carbamoyl phosphate is bound by residues 262 to 263 (CL) and Arg-290.

Belongs to the aspartate/ornithine carbamoyltransferase superfamily. OTCase family.

The protein localises to the cytoplasm. The enzyme catalyses carbamoyl phosphate + L-ornithine = L-citrulline + phosphate + H(+). The protein operates within amino-acid biosynthesis; L-arginine biosynthesis; L-arginine from L-ornithine and carbamoyl phosphate: step 1/3. In terms of biological role, reversibly catalyzes the transfer of the carbamoyl group from carbamoyl phosphate (CP) to the N(epsilon) atom of ornithine (ORN) to produce L-citrulline. The chain is Ornithine carbamoyltransferase from Methanococcus aeolicus (strain ATCC BAA-1280 / DSM 17508 / OCM 812 / Nankai-3).